The following is a 253-amino-acid chain: Sulfate transporter CysZ (253 aa).

4 consecutive transmembrane segments (helical) span residues 31–51, 75–95, 151–171, and 222–242; these read FVILPLLVNILLMGGAFWWLF, LLWPLAVISVLLVFGYFFSTI, IVLLILYFIPGIGQTVAPVLW, and IPLLNLFIMPVAVCGATAMWV.

This sequence belongs to the CysZ family.

It is found in the cell inner membrane. High affinity, high specificity proton-dependent sulfate transporter, which mediates sulfate uptake. Provides the sulfur source for the cysteine synthesis pathway. The chain is Sulfate transporter CysZ from Shigella flexneri.